Reading from the N-terminus, the 175-residue chain is ATP-dependent protease subunit HslV (175 aa).

Residue threonine 2 is part of the active site. Na(+) contacts are provided by alanine 156, cysteine 159, and threonine 162.

This sequence belongs to the peptidase T1B family. HslV subfamily. A double ring-shaped homohexamer of HslV is capped on each side by a ring-shaped HslU homohexamer. The assembly of the HslU/HslV complex is dependent on binding of ATP.

The protein resides in the cytoplasm. The enzyme catalyses ATP-dependent cleavage of peptide bonds with broad specificity.. Allosterically activated by HslU binding. In terms of biological role, protease subunit of a proteasome-like degradation complex believed to be a general protein degrading machinery. The chain is ATP-dependent protease subunit HslV from Rhizobium etli (strain ATCC 51251 / DSM 11541 / JCM 21823 / NBRC 15573 / CFN 42).